Consider the following 294-residue polypeptide: uncharacterized protein (294 aa).

Active-site charge relay system residues include T43 and Y104. The active-site Proton donor is the Y130. K158 serves as the catalytic Schiff-base intermediate with substrate.

Belongs to the DapA family. In terms of assembly, homotetramer.

It is found in the cytoplasm. This is an uncharacterized protein from Pyrococcus abyssi (strain GE5 / Orsay).